The sequence spans 241 residues: Peroxisomal membrane protein 11C (241 aa).

Topologically, residues 1–124 (MASLSGLASA…ARVLHVDSSR (124 aa)) are cytoplasmic. Residues 125–149 (WWTLSTTLWALSLLLGVARSLWMLL) traverse the membrane as a helical segment. Residues 150–211 (KLRQRLRSPT…GVLWAGRFPP (62 aa)) lie on the Lumenal side of the membrane. The helical transmembrane segment at 212–227 (WLVGLMGTISSILSMY) threads the bilayer. Residues 228-241 (QAARAGGQAEATTP) lie on the Cytoplasmic side of the membrane.

The protein belongs to the peroxin-11 family. In terms of assembly, homodimer. Heterodimer with either PEX11A or PEX11B. Interacts with FIS1.

It is found in the peroxisome membrane. Promotes membrane protrusion and elongation on the peroxisomal surface. The polypeptide is Peroxisomal membrane protein 11C (PEX11G) (Homo sapiens (Human)).